The sequence spans 109 residues: Putative double-stranded DNA mimic protein YciU (109 aa).

The protein belongs to the putative dsDNA mimic protein family.

Functionally, may act as a double-stranded DNA (dsDNA) mimic. Probably regulates the activity of a dsDNA-binding protein. The chain is Putative double-stranded DNA mimic protein YciU from Salmonella choleraesuis (strain SC-B67).